The following is a 790-amino-acid chain: N-methylputrescine oxidase 1, peroxisomal (790 aa).

The tract at residues 1–23 (MATTKQKVTAPSPSPSSSTASCC) is disordered. Residues 9 to 23 (TAPSPSPSSSTASCC) are compositionally biased toward low complexity. 423–434 (AFDAGEDGLGKN) lines the substrate pocket. Residue Asp-425 is the Proton acceptor of the active site. Residues Cys-444 and Cys-470 are joined by a disulfide bond. 506–511 (VANYEY) provides a ligand contact to substrate. The active-site Schiff-base intermediate with substrate; via topaquinone is Tyr-509. 2',4',5'-topaquinone is present on Tyr-509. His-559 and His-561 together coordinate Cu cation. Positions 714 and 715 each coordinate Mn(2+). Position 725 (His-725) interacts with Cu cation.

The protein belongs to the copper/topaquinone oxidase family. Homodimer. Cu cation serves as cofactor. It depends on Zn(2+) as a cofactor. The cofactor is L-topaquinone. In terms of processing, topaquinone (TPQ) is generated by copper-dependent autoxidation of a specific tyrosyl residue. As to expression, mainly expressed in roots, and, to a lower extent, in stems.

It localises to the peroxisome. It carries out the reaction a primary methyl amine + O2 + H2O = an aldehyde + H2O2 + NH4(+). The catalysed reaction is N-methylputrescine + O2 + H2O = 4-methylaminobutanal + H2O2 + NH4(+). It participates in alkaloid biosynthesis; nicotine biosynthesis. Functionally, involved in the biosynthesis of pyridine alkaloid natural products, leading mainly to the production of anabasine, anatabine, nicotine and nornicotine, effective deterrents against herbivores with antiparasitic and pesticide properties (neurotoxins); nornicotine serves as the precursor in the synthesis of the carcinogen compound N'-nitrosonornicotine (NNN). Amine oxidase which mediates the deamination of N-methylputrescine to produce 4-methylaminobutanal. Oxidizes preferentially N-methylated amines. This chain is N-methylputrescine oxidase 1, peroxisomal, found in Nicotiana tabacum (Common tobacco).